The sequence spans 97 residues: Small cell adhesion glycoprotein (97 aa).

Residues Met-1–Leu-36 lie on the Extracellular side of the membrane. Residue Thr-7 is glycosylated (O-linked (GalNAc...) threonine). The O-linked (GalNAc...) serine glycan is linked to Ser-9. 3 O-linked (GalNAc...) threonine glycosylation sites follow: Thr-15, Thr-16, and Thr-24. The O-linked (GalNAc...) serine glycan is linked to Ser-26. Residues Ile-37–Phe-57 form a helical; Signal-anchor for type III membrane protein membrane-spanning segment. Residues Tyr-58–Ile-97 are Cytoplasmic-facing.

This sequence belongs to the SMAGP family. Post-translationally, O-glycosylated. The O-glycan is modified with sialic acid residues. In terms of tissue distribution, detected in brain (at protein level). Highly expressed in kidney and placenta. Detected in skin, breast, heart, lung, liver, prostate, spleen, small intestine, colon and stomach.

It is found in the cell membrane. The protein resides in the cytoplasmic vesicle membrane. Its function is as follows. May play a role in epithelial cell-cell contacts. May play a role in tumor invasiveness and metastasis formation. The chain is Small cell adhesion glycoprotein (Smagp) from Rattus norvegicus (Rat).